A 1014-amino-acid chain; its full sequence is EMILIN-1-A (1014 aa).

Residues 1–27 (MALYFVYLSTLLALILLGDNWAAGTYA) form the signal peptide. The 76-residue stretch at 53–128 (HRNWCAYVVT…HGYSGDDCSD (76 aa)) folds into the EMI domain. 3 disulfides stabilise this stretch: cysteine 57/cysteine 118, cysteine 84/cysteine 89, and cysteine 117/cysteine 126. 2 disordered regions span residues 125 to 150 (DCSD…SDSD) and 811 to 869 (QDFT…ANVP). Positions 134–150 (HDSRARPTGEEGRSDSD) are enriched in basic and acidic residues. Positions 145-179 (GRSDSDRIRQLEEQIQSLNKNLHNLQKKIYEESQR) form a coiled coil. The region spanning 815–865 (GPPGLPGPQGEKGSKGPPGPRGPLGKEGPQGRVGPVGPPGLRGEQGPPGKD) is the Collagen-like domain. Low complexity predominate over residues 840–856 (KEGPQGRVGPVGPPGLR). In terms of domain architecture, C1q spans 866-1012 (ANVPRLSFSA…GMLLYEESED (147 aa)).

The protein resides in the secreted. Its subcellular location is the extracellular space. It is found in the extracellular matrix. Its function is as follows. May be responsible for anchoring smooth muscle cells to elastic fibers, and may be involved not only in the formation of the elastic fiber, but also in the processes that regulate vessel assembly. Has cell adhesive capacity. This chain is EMILIN-1-A, found in Danio rerio (Zebrafish).